Reading from the N-terminus, the 354-residue chain is Ephrin-4 (354 aa).

Positions 1 to 22 (MKRPLDFLLAICLILLRSSTFA) are cleaved as a signal peptide. One can recognise an Ephrin RBD domain in the interval 23-173 (DEHTVHWNST…SKNMRLSMKV (151 aa)). Asn30 carries N-linked (GlcNAc...) asparagine glycosylation. 2 disulfide bridges follow: Cys55–Cys92 and Cys80–Cys162. The segment at 173–196 (VLSSQPTPSPSSKPARSRTDARRQ) is disordered. Positions 175-186 (SSQPTPSPSSKP) are enriched in low complexity. Ser335 carries the GPI-anchor amidated serine lipid modification. Residues 336-354 (SSSLPTFLIVFLIAVNLLF) constitute a propeptide, removed in mature form.

This sequence belongs to the ephrin family. Post-translationally, may undergo proteolysis by metalloprotease sup-17 to give rise to a soluble form.

The protein localises to the cell membrane. Functionally, regulates the formation or stabilization of cell-cell contacts at several stages of epithelial morphogenesis. In early embryonic development, involved in ventral closure of the epidermis. During male tail morphogenesis, regulates precursor cell sorting together with mab-20 and allows the formation of distinct sensory rays. Probably acts as a ligand for lad-2 to regulate axon guidance of several neurons including SDQL, SDQR, SMD and PLN neurons during neurogenesis. The sequence is that of Ephrin-4 (efn-4) from Caenorhabditis briggsae.